A 2091-amino-acid chain; its full sequence is Protein Ycf2 (2091 aa).

The tract at residues 191–210 (DSSQLKGSSDQSRDPLDSIS) is disordered. 1432-1439 (GSIGTGRS) provides a ligand contact to ATP.

This sequence belongs to the Ycf2 family.

The protein resides in the plastid. Its subcellular location is the chloroplast stroma. In terms of biological role, probable ATPase of unknown function. Its presence in a non-photosynthetic plant (Epifagus virginiana) and experiments in tobacco indicate that it has an essential function which is probably not related to photosynthesis. This chain is Protein Ycf2, found in Daucus carota (Wild carrot).